Reading from the N-terminus, the 1011-residue chain is Liprin-beta-1 (1011 aa).

At Ser37 the chain carries Phosphoserine. Thr39 carries the phosphothreonine modification. Ser40 is modified (phosphoserine). Residues 156–405 are a coiled coil; sequence QQELLSRTSL…VPEEFHTTIL (250 aa). N6-acetyllysine is present on Lys322. 2 disordered regions span residues 420-439 and 463-634; these read ETSEKSKLTPKPETSFEEND and KSSS…RDLG. Phosphoserine occurs at positions 434 and 466. The segment covering 470–492 has biased composition (basic and acidic residues); that stretch reads LKKETSDGEKETIQKTSEDRAPA. A Glycyl lysine isopeptide (Lys-Gly) (interchain with G-Cter in SUMO2) cross-link involves residue Lys471. Phosphoserine is present on residues Ser523 and Ser540. Residues 546 to 556 are compositionally biased toward basic and acidic residues; sequence ETEKETAEHLD. Position 579 is a phosphoserine (Ser579). Over residues 584 to 598 the composition is skewed to basic residues; that stretch reads KKSRGIMKLFGKLRR. Residues Ser601 and Ser636 each carry the phosphoserine modification. SAM domains follow at residues 647–711 and 719–782; these read WTKE…LGSE and LDFN…LRIN. Ser794 is modified (phosphoserine). The 73-residue stretch at 804-876 folds into the SAM 3 domain; it reads VQKWTNHRVM…ATHFNLLIGA (73 aa). A phosphoserine mark is found at Ser999, Ser1001, and Ser1003. Thr1005 is modified (phosphothreonine).

Belongs to the liprin family. Liprin-beta subfamily. Forms homodimers and heterodimers. Interacts with S100A4 in a Ca(2+)-dependent mode. Part of a cortical microtubule stabilization complex (CMSC) composed of KANK1, PPFIA1, PPFIBP1, ERC1/ELKS, PHLDB2/LL5beta, CLASPs, KIF21A and possibly additional interactors; within CMSCs KANK1 and PHLDB2/LL5beta seem to be the core components for recruiting microtubule-binding proteins KIF21A and CLASPs, whereas PPFIA1, PPFIBP1 and ERC1/ELKS serve as scaffolds for protein clustering. Interacts with KANK1 (via CC1 domain, residues 244-339). In terms of tissue distribution, widely expressed. Absent in liver.

The protein localises to the cytoplasm. Its subcellular location is the cell cortex. In terms of biological role, may regulate the disassembly of focal adhesions. Did not bind receptor-like tyrosine phosphatases type 2A. The polypeptide is Liprin-beta-1 (PPFIBP1) (Homo sapiens (Human)).